The primary structure comprises 139 residues: Ribonuclease VapC3 (139 aa).

Residues 14–121 form the PINc domain; sequence EAIVLDTGAF…VATDDYTLQR (108 aa). Aspartate 19 contacts Mg(2+).

This sequence belongs to the PINc/VapC protein family. Requires Mg(2+) as cofactor.

Functionally, toxic component of a type II toxin-antitoxin (TA) system. An RNase. This Aeropyrum pernix (strain ATCC 700893 / DSM 11879 / JCM 9820 / NBRC 100138 / K1) protein is Ribonuclease VapC3.